A 229-amino-acid polypeptide reads, in one-letter code: Flagellar L-ring protein 1 (229 aa).

Residues 1 to 18 (MYLRKISAPLMTMLLLNG) form the signal peptide. A lipid anchor (N-palmitoyl cysteine) is attached at cysteine 19. Cysteine 19 carries the S-diacylglycerol cysteine lipid modification.

Belongs to the FlgH family. As to quaternary structure, the basal body constitutes a major portion of the flagellar organelle and consists of four rings (L,P,S, and M) mounted on a central rod.

Its subcellular location is the cell outer membrane. It localises to the bacterial flagellum basal body. In terms of biological role, assembles around the rod to form the L-ring and probably protects the motor/basal body from shearing forces during rotation. The chain is Flagellar L-ring protein 1 (flgH1) from Yersinia pseudotuberculosis serotype I (strain IP32953).